We begin with the raw amino-acid sequence, 103 residues long: PTS system oligo-beta-mannoside-specific EIIB component (103 aa).

Residues 1 to 103 form the PTS EIIB type-3 domain; that stretch reads MKKILLACSS…EQALSLMVNQ (103 aa). The active-site Phosphocysteine intermediate is the C8. C8 is subject to Phosphocysteine; by EIIA.

It localises to the cytoplasm. It carries out the reaction D-cellobiose(out) + N(pros)-phospho-L-histidyl-[protein] = 6-phospho-beta-D-glucosyl-(1-&gt;4)-D-glucose(in) + L-histidyl-[protein]. Functionally, the phosphoenolpyruvate-dependent sugar phosphotransferase system (sugar PTS), a major carbohydrate active transport system, catalyzes the phosphorylation of incoming sugar substrates concomitantly with their translocation across the cell membrane. The enzyme II GmuABC PTS system is involved in the transport of oligo-glucomannans such as cellobiose or mannobiose. The sequence is that of PTS system oligo-beta-mannoside-specific EIIB component from Bacillus subtilis (strain 168).